An 87-amino-acid chain; its full sequence is Small ribosomal subunit protein uS17 (87 aa).

Belongs to the universal ribosomal protein uS17 family. As to quaternary structure, part of the 30S ribosomal subunit.

In terms of biological role, one of the primary rRNA binding proteins, it binds specifically to the 5'-end of 16S ribosomal RNA. This Dichelobacter nodosus (strain VCS1703A) protein is Small ribosomal subunit protein uS17.